The following is a 1879-amino-acid chain: MIFQSFILGNLVSLCMKIINSVVVVGLYYGFLTTFSIGPSYLFLLRARVMEEGEEGTEKKVSATTGFITGQLMMFISIYYAPLHLALGRPHTITVLALPYLLFHFFWNNHKHFFDYGSTNRNSMRNLSIQCVFLNNLIFQLFNHFILPSSMLVRLVNIYMFRCNNKMLFVTSSFVGWLIGHILFMKWVGLVLVWIQQNNSIRSNKYLMSELRNFMVRIFSILLFITCVYYLGRIPSPILTKKLKETEERGESEEERDVEKTSETKGTKQEQEGSTEEDPSPSLFSEEKEDPEKIDFKETRYKNKPVYETYYLDVDRNQENSKLEIFKEKKELLWFEKPLVTILFDYKRWNRPFRYIKNDKFENAVKNEMSQYFFHTCESDGKKRISFTYPPSLSTFFEMIQRKMSLFTTDKLYSDELYNNWSYTNEQKRKNLNNKLINIIKDLDKALDSKFLILDVLEKRPRLCHDNTKKKYLPKVYDPFLNGAYRGQIKKRFSLSIKDKVSIQNYIERGWINKIHGLFLIINYLEFEEKKPFHRIDKRLLSTEMNFFLNLINEFNGKPTSSLNFKKFYLLPEHKQLRINLEGREKKIRFLFERFLTDPNNKTIRKQAIGIKEIRKKIPQWSYKLIDDLEQEEGENEEALGTDSQIRSRKCKRVLIFNHELENTNGYSNSQDTNNNDERDDIALIRYSQQSDFRRDIIKGSMRAQRRKTVIWKTFQANVHSLPFLDRIDKDVYFSFDMLRPIKKKFQHWLWKKPEFKISDYREKKSKDKKKEEEKRRENARIEIAETWDSIVVAQVIRGFVLVIQSILRKYIILPSLIIVKNIGRILLFQFPEWSEDVKDWKREVHVNCTYNGVQLAEKEFPKNWLIDGIQIKILFPFRLKPWHKSKLKLRNNYKDPMKKKEQQNDFCFLTVWGMETELPFGSPRKQLSFFEPIFKELKKRLIKLKKKCFRILIILKERTKLFLNVSKERKKWVIKNIVFLKKIIKELSKMNPILLVGLREIELYELSESKKEKNLIIDNELIHEPSINIQSTNWTTFSLTKKKIQDLTNRTNTTINQIQKISKDNKKGFLSPHINISSNKMSYNDKRLELPKNILQLLKRRNVRLIRKSNYFIKFFIERIYRNIFLFISNIPKINAQLFFYFFESLKKIVNKTSSYNNYIYNNERNQEKIDKTNQKITQFISTIKESLSNINNKNLETFCNLSYLSQAYVFYKLSQSRGFNFFNLYKLRLRSVFQYNGAFLFLKNEIKDYFLGTQKIFHSELRHKNIPNYEINQWKNCLRGYYQNNLSQSRLVPQKGINIVNQHSIAQNNHLNKYDSYEKNPLINSEKKNVKKKYRYDLLSYNFINYEDKKNSSIYGLPLQVNNNQEIFYNYTEHKRKLFNMLVGIPINNYLVEDNIIDIKNNPDRKNFDWIILNFCLRKKMDIRAWINMDTDANSNKYTKPRANNYQIIDKIDNKDLFYPTIHQNQEMNPSKKKLFDWMRMNEEILSCPISNLELWFFPEFLILYTSYKIKPWYIPIKFLLLNLNVNENASGNKNKKTTGKKKRDIFISIFSNEKKYLELEKQNQVEKEYGIKTDFESTLSNQEKDIEENYAVSKMKKNKKQSRTNMEAEFDFLLKRYLLFQLRWDDSLNKKMIDNIKVYCSLLRPINLREITIASIQRGEINLDLLMIQKNFILTELIKKGILLIEPVRLSRKNEGQFIMYQTIGISLVHKSKHTINQRYREKGLVDTKNFDEFISKHQKMTENRDKNHYDLFVPETILSPRHRRELRILICFNSRNRNGIPSNAFFCNENKVKSPVLNKSKINQNNIIRLKFFLWPNYRLEDFACMNRYWFDTNNGSRFSMVRIHMYPQFKNELKRVLKKSEIRIDFISRTILHI.

A run of 6 helical transmembrane segments spans residues 18–38 (IINS…FSIG), 67–87 (FITG…HLAL), 90–110 (PHTI…WNNH), 127–147 (LSIQ…HFIL), 175–195 (VGWL…LVWI), and 218–238 (IFSI…PSPI). Residues 243–291 (LKETEERGESEEERDVEKTSETKGTKQEQEGSTEEDPSPSLFSEEKEDP) form a disordered region. Over residues 257-271 (DVEKTSETKGTKQEQ) the composition is skewed to basic and acidic residues.

It belongs to the TIC214 family. In terms of assembly, part of the Tic complex.

The protein resides in the plastid. The protein localises to the chloroplast inner membrane. Involved in protein precursor import into chloroplasts. May be part of an intermediate translocation complex acting as a protein-conducting channel at the inner envelope. The sequence is that of Protein TIC 214 from Morus indica (Mulberry).